Consider the following 141-residue polypeptide: MLMPKKTKYRKQQKGRNRGKAYNGNSLAFGTIGIKALEHGRIDSRQIEAARVAMTRKVKRTGKIWIRVFPDKPLTKKPLETRMGKGKGSVEKWVMNIKPGRIIYEMAGVEESLAREALDLARYKLPFKTKIVTQESENEIY.

The span at 1–19 shows a compositional bias: basic residues; it reads MLMPKKTKYRKQQKGRNRG. Residues 1–22 are disordered; that stretch reads MLMPKKTKYRKQQKGRNRGKAY.

Belongs to the universal ribosomal protein uL16 family. As to quaternary structure, part of the 50S ribosomal subunit.

In terms of biological role, binds 23S rRNA and is also seen to make contacts with the A and possibly P site tRNAs. The polypeptide is Large ribosomal subunit protein uL16 (Nitratiruptor sp. (strain SB155-2)).